We begin with the raw amino-acid sequence, 200 residues long: Superoxide dismutase [Fe] (200 aa).

Fe cation is bound by residues His28, His80, Asp162, and His166.

It belongs to the iron/manganese superoxide dismutase family. Homodimer. Fe cation serves as cofactor.

It carries out the reaction 2 superoxide + 2 H(+) = H2O2 + O2. Its function is as follows. Destroys superoxide anion radicals which are normally produced within the cells and which are toxic to biological systems. This chain is Superoxide dismutase [Fe] (sodB), found in Nostoc sp. (strain PCC 7120 / SAG 25.82 / UTEX 2576).